The sequence spans 211 residues: Peptidyl-prolyl cis-trans isomerase FKBP14 (211 aa).

Residues 1 to 19 (MRFFLWNAILALWVTVLSG) form the signal peptide. Residues cysteine 38 and cysteine 96 are joined by a disulfide bond. The PPIase FKBP-type domain occupies 45–135 (GDLMLVHYEG…IFNIDLLEIR (91 aa)). Residues 135 to 170 (RNGPRSHESFQEMDLNDDWRLSKHEVKVYLQKEFEK) enclose the EF-hand 1 domain. 5 residues coordinate Ca(2+): aspartate 148, asparagine 150, aspartate 152, arginine 154, and glutamate 159. Residue asparagine 176 is glycosylated (N-linked (GlcNAc...) asparagine). An EF-hand 2 domain is found at 179–211 (HHDALVEDIFDKEDEDKDGFISAREFTYVHDEL). Aspartate 192, aspartate 194, aspartate 196, and glutamate 203 together coordinate Ca(2+). Residues 208–211 (HDEL) carry the Prevents secretion from ER motif.

As to quaternary structure, monomer. Homodimer. Interacts with type III, type IV and type X collagens.

The protein resides in the endoplasmic reticulum lumen. It catalyses the reaction [protein]-peptidylproline (omega=180) = [protein]-peptidylproline (omega=0). With respect to regulation, inhibited by tacrolimus/FK506. PPIase which accelerates the folding of proteins during protein synthesis. Has a preference for substrates containing 4-hydroxylproline modifications, including type III collagen. May also target type VI and type X collagens. The protein is Peptidyl-prolyl cis-trans isomerase FKBP14 (Fkbp14) of Mus musculus (Mouse).